Here is a 51-residue protein sequence, read N- to C-terminus: Large ribosomal subunit protein eL39 (51 aa).

Residues 1 to 22 (MAAQKSFRIKQKMAKAKKQNRP) are disordered. Residues 7–20 (FRIKQKMAKAKKQN) show a composition bias toward basic residues.

Belongs to the eukaryotic ribosomal protein eL39 family. As to quaternary structure, component of the large ribosomal subunit (LSU). Mature yeast ribosomes consist of a small (40S) and a large (60S) subunit. The 40S small subunit contains 1 molecule of ribosomal RNA (18S rRNA) and 33 different proteins (encoded by 57 genes). The large 60S subunit contains 3 rRNA molecules (25S, 5.8S and 5S rRNA) and 46 different proteins (encoded by 81 genes). eL39 interacts with YIH1.

The protein localises to the cytoplasm. Its function is as follows. Component of the ribosome, a large ribonucleoprotein complex responsible for the synthesis of proteins in the cell. The small ribosomal subunit (SSU) binds messenger RNAs (mRNAs) and translates the encoded message by selecting cognate aminoacyl-transfer RNA (tRNA) molecules. The large subunit (LSU) contains the ribosomal catalytic site termed the peptidyl transferase center (PTC), which catalyzes the formation of peptide bonds, thereby polymerizing the amino acids delivered by tRNAs into a polypeptide chain. The nascent polypeptides leave the ribosome through a tunnel in the LSU and interact with protein factors that function in enzymatic processing, targeting, and the membrane insertion of nascent chains at the exit of the ribosomal tunnel. This Saccharomyces cerevisiae (strain ATCC 204508 / S288c) (Baker's yeast) protein is Large ribosomal subunit protein eL39.